The primary structure comprises 770 residues: Conserved oligomeric Golgi complex subunit 7 (770 aa).

It belongs to the COG7 family. In terms of assembly, component of the conserved oligomeric Golgi complex which is composed of eight different subunits and is required for normal Golgi morphology and localization.

It localises to the golgi apparatus membrane. Required for normal Golgi function. The chain is Conserved oligomeric Golgi complex subunit 7 (COG7) from Homo sapiens (Human).